Here is a 117-residue protein sequence, read N- to C-terminus: Hydrogenase maturation factor HypA (117 aa).

His-2 is a binding site for Ni(2+). Residues Cys-73, Cys-76, Cys-90, and Cys-93 each coordinate Zn(2+).

This sequence belongs to the HypA/HybF family.

In terms of biological role, involved in the maturation of [NiFe] hydrogenases. Required for nickel insertion into the metal center of the hydrogenase. This is Hydrogenase maturation factor HypA from Pectobacterium atrosepticum (strain SCRI 1043 / ATCC BAA-672) (Erwinia carotovora subsp. atroseptica).